Reading from the N-terminus, the 493-residue chain is UDP-N-acetylmuramoyl-L-alanyl-D-glutamate--2,6-diaminopimelate ligase (493 aa).

A UDP-N-acetyl-alpha-D-muramoyl-L-alanyl-D-glutamate-binding site is contributed by S30. An ATP-binding site is contributed by 114–120; it reads GTNGKTS. UDP-N-acetyl-alpha-D-muramoyl-L-alanyl-D-glutamate is bound by residues 156–157, S183, Q189, and R191; that span reads TT. Position 223 is an N6-carboxylysine (K223). Meso-2,6-diaminopimelate contacts are provided by residues R386, 410-413, G460, and E464; that span reads DNPR. The Meso-diaminopimelate recognition motif signature appears at 410–413; that stretch reads DNPR.

The protein belongs to the MurCDEF family. MurE subfamily. Mg(2+) serves as cofactor. Post-translationally, carboxylation is probably crucial for Mg(2+) binding and, consequently, for the gamma-phosphate positioning of ATP.

It is found in the cytoplasm. It catalyses the reaction UDP-N-acetyl-alpha-D-muramoyl-L-alanyl-D-glutamate + meso-2,6-diaminopimelate + ATP = UDP-N-acetyl-alpha-D-muramoyl-L-alanyl-gamma-D-glutamyl-meso-2,6-diaminopimelate + ADP + phosphate + H(+). Its pathway is cell wall biogenesis; peptidoglycan biosynthesis. In terms of biological role, catalyzes the addition of meso-diaminopimelic acid to the nucleotide precursor UDP-N-acetylmuramoyl-L-alanyl-D-glutamate (UMAG) in the biosynthesis of bacterial cell-wall peptidoglycan. This is UDP-N-acetylmuramoyl-L-alanyl-D-glutamate--2,6-diaminopimelate ligase from Chromobacterium violaceum (strain ATCC 12472 / DSM 30191 / JCM 1249 / CCUG 213 / NBRC 12614 / NCIMB 9131 / NCTC 9757 / MK).